We begin with the raw amino-acid sequence, 424 residues long: Cytoplasmic tRNA 2-thiolation protein 2 (424 aa).

The interval Pro357–Asp385 is disordered. The span at Leu368–Asp385 shows a compositional bias: basic and acidic residues.

It belongs to the CTU2/NCS2 family.

It is found in the cytoplasm. It participates in tRNA modification; 5-methoxycarbonylmethyl-2-thiouridine-tRNA biosynthesis. Functionally, plays a central role in 2-thiolation of mcm(5)S(2)U at tRNA wobble positions of tRNA(Lys), tRNA(Glu) and tRNA(Gln). May act by forming a heterodimer with NCS6 that ligates sulfur from thiocarboxylated URM1 onto the uridine of tRNAs at wobble position. Prior mcm(5) tRNA modification by the elongator complex is required for 2-thiolation. May also be involved in protein urmylation. The polypeptide is Cytoplasmic tRNA 2-thiolation protein 2 (Yarrowia lipolytica (strain CLIB 122 / E 150) (Yeast)).